Consider the following 584-residue polypeptide: High-affinity choline transporter 1 (584 aa).

The Extracellular segment spans residues Met1–Asp6. The chain crosses the membrane as a helical span at residues Gly7 to Trp27. Topologically, residues Lys28–Asp50 are cytoplasmic. The chain crosses the membrane as a helical span at residues Ile51–Asn71. The Extracellular segment spans residues Gly72–Gly83. Residues Leu84–Phe104 form a helical membrane-spanning segment. Residues Ala105–Arg127 lie on the Cytoplasmic side of the membrane. A helical membrane pass occupies residues Met128–Leu148. Residues Ser149–Ser166 are Extracellular-facing. Residues Val167 to Ala187 form a helical membrane-spanning segment. Residues Tyr188–Gln193 lie on the Cytoplasmic side of the membrane. Residues Leu194–Val214 traverse the membrane as a helical segment. Residues Thr215 to Ser239 are Extracellular-facing. The helical transmembrane segment at Leu240–Phe260 threads the bilayer. Residues Gln261–Ser276 are Cytoplasmic-facing. A helical membrane pass occupies residues Phe277–Gly297. The Extracellular segment spans residues Thr298–Asp319. An N-linked (GlcNAc...) asparagine glycan is attached at Asn303. The chain crosses the membrane as a helical span at residues Met320 to Gly340. The Cytoplasmic portion of the chain corresponds to Ala341–Glu378. Residues Ile379–Leu399 traverse the membrane as a helical segment. Residues Leu400–Trp408 are Extracellular-facing. A helical membrane pass occupies residues Tyr409 to Val429. Topologically, residues Lys430–Ser437 are cytoplasmic. Residues Ile438–Met458 form a helical membrane-spanning segment. Over Gln459–Thr487 the chain is Extracellular. Residues Met488–Phe508 form a helical membrane-spanning segment. At Val509–Asp584 the chain is on the cytoplasmic side.

Belongs to the sodium:solute symporter (SSF) (TC 2.A.21) family. Post-translationally, phosphorylated. As to expression, specific for cholinergic neurons.

Its subcellular location is the membrane. Functionally, imports choline from the extracellular space to the neuron with high affinity. Rate-limiting step in acetylcholine synthesis. Sodium ion and chloride ion dependent. In Torpedo marmorata (Marbled electric ray), this protein is High-affinity choline transporter 1 (CHT1).